A 458-amino-acid chain; its full sequence is tRNA modification GTPase MnmE (458 aa).

3 residues coordinate (6S)-5-formyl-5,6,7,8-tetrahydrofolate: R28, E85, and K124. One can recognise a TrmE-type G domain in the interval 220–381 (GMNVVIAGRP…LKEHLKAVMG (162 aa)). N230 contacts K(+). Residues 230–235 (NAGKSS), 249–255 (TDIEGTT), and 274–277 (DTAG) each bind GTP. Mg(2+) is bound at residue S234. The K(+) site is built by T249, I251, and T254. T255 contributes to the Mg(2+) binding site. Residue K458 coordinates (6S)-5-formyl-5,6,7,8-tetrahydrofolate.

Belongs to the TRAFAC class TrmE-Era-EngA-EngB-Septin-like GTPase superfamily. TrmE GTPase family. As to quaternary structure, homodimer. Heterotetramer of two MnmE and two MnmG subunits. K(+) serves as cofactor.

The protein localises to the cytoplasm. In terms of biological role, exhibits a very high intrinsic GTPase hydrolysis rate. Involved in the addition of a carboxymethylaminomethyl (cmnm) group at the wobble position (U34) of certain tRNAs, forming tRNA-cmnm(5)s(2)U34. This chain is tRNA modification GTPase MnmE, found in Chromohalobacter salexigens (strain ATCC BAA-138 / DSM 3043 / CIP 106854 / NCIMB 13768 / 1H11).